The chain runs to 627 residues: UvrABC system protein C (627 aa).

The GIY-YIG domain occupies 26–105 (PEPGVYFMRD…IKQHQPYFNV (80 aa)). Residues 215–250 (QELIDILSEQMEKAAEALNFEVAARIRDQIAGLKSL) form the UVR domain.

This sequence belongs to the UvrC family. As to quaternary structure, interacts with UvrB in an incision complex.

The protein resides in the cytoplasm. In terms of biological role, the UvrABC repair system catalyzes the recognition and processing of DNA lesions. UvrC both incises the 5' and 3' sides of the lesion. The N-terminal half is responsible for the 3' incision and the C-terminal half is responsible for the 5' incision. The chain is UvrABC system protein C from Trichormus variabilis (strain ATCC 29413 / PCC 7937) (Anabaena variabilis).